The chain runs to 475 residues: Aspartyl/glutamyl-tRNA(Asn/Gln) amidotransferase subunit B (475 aa).

Belongs to the GatB/GatE family. GatB subfamily. As to quaternary structure, heterotrimer of A, B and C subunits.

The enzyme catalyses L-glutamyl-tRNA(Gln) + L-glutamine + ATP + H2O = L-glutaminyl-tRNA(Gln) + L-glutamate + ADP + phosphate + H(+). The catalysed reaction is L-aspartyl-tRNA(Asn) + L-glutamine + ATP + H2O = L-asparaginyl-tRNA(Asn) + L-glutamate + ADP + phosphate + 2 H(+). Functionally, allows the formation of correctly charged Asn-tRNA(Asn) or Gln-tRNA(Gln) through the transamidation of misacylated Asp-tRNA(Asn) or Glu-tRNA(Gln) in organisms which lack either or both of asparaginyl-tRNA or glutaminyl-tRNA synthetases. The reaction takes place in the presence of glutamine and ATP through an activated phospho-Asp-tRNA(Asn) or phospho-Glu-tRNA(Gln). In Mycoplasma mobile (strain ATCC 43663 / 163K / NCTC 11711) (Mesomycoplasma mobile), this protein is Aspartyl/glutamyl-tRNA(Asn/Gln) amidotransferase subunit B.